Reading from the N-terminus, the 275-residue chain is T cell receptor alpha chain MC.7.G5 (275 aa).

A signal peptide spans 1-21; the sequence is MACPGFLWALVISTCLEFSMA. In terms of domain architecture, Ig-like V-type spans 22-116; the sequence is QTVTQSQPEM…AAMYFCAYRS (95 aa). Residues 22–116 are t cell receptor alpha variable 38-2DV8; the sequence is QTVTQSQPEM…AAMYFCAYRS (95 aa). Cys43 and Cys112 are joined by a disulfide. A CDR1 region spans residues 47–53; that stretch reads TSESDYY. Residues 71-81 form a CDR2 region; sequence QEAYKQQNATE. Asn78 carries an N-linked (GlcNAc...) asparagine glycan. A CDR3 region spans residues 112–124; it reads CAYRSAVNARLMF. The interval 119–134 is t cell receptor alpha joining 31; the sequence is NARLMFGDGTQLVVKP. The t cell receptor alpha constant stretch occupies residues 136–275; that stretch reads IQNPDPAVYQ…LLMTLRLWSS (140 aa). Residues 154–242 enclose the Ig-like C1-type domain; that stretch reads KSVCLFTDFD…LVEKSFETDT (89 aa). Cys157 and Cys207 are joined by a disulfide. 4 N-linked (GlcNAc...) asparagine glycosylation sites follow: Asn167, Asn201, Asn212, and Asn248. The interval 229-250 is connecting peptide; it reads CDVKLVEKSFETDTNLNFQNLS. The helical transmembrane segment at 251–273 threads the bilayer; it reads VIGFRILLLKVAGFNLLMTLRLW. Residues 274-275 are Cytoplasmic-facing; sequence SS.

As to quaternary structure, disulfide-linked heterodimer with TRBV25-1*01J2S3*01C2*01 beta chain. The alpha-beta TR associates with the transmembrane signaling CD3 coreceptor proteins to form the TR-CD3 (TCR). The assembly of alpha-beta TR heterodimers with CD3 occurs in the endoplasmic reticulum where a single alpha-beta TR heterodimer associates with one CD3D-CD3E heterodimer, one CD3G-CD3E heterodimer and one CD247 homodimer forming a stable octameric structure. CD3D-CD3E and CD3G-CD3E heterodimers preferentially associate with TR alpha and TR beta chains (via TM domain), respectively. The association of the CD247 homodimer is the last step of TCR assembly in the endoplasmic reticulum and is required for transport to the cell surface. As to expression, expressed in MR1-restricted CD8-positive T cells.

Its subcellular location is the cell membrane. Functionally, the alpha chain of TRAV38-2DV8*01J31*01C*01/TRBV25-1*01J2S3*01C2*01 alpha-beta T cell receptor (TR) clonotype that displays pan-cancer cell recognition via the invariant MR1 molecule. On CD8-positive T cell clone MC.7.G5, likely recognizes tumor-specific or -associated metabolite(s) essential for cancer cell survival, triggering killing of many cancer cell types including lung, melanoma, leukemia, colon, breast, prostate, bone and ovarian cancer cells. Mediates cancer cell cytotoxicity in an HLA-independent manner. Has no reactivity to healthy cells, even stressed or infected by bacteria. Antigen recognition initiates TR-CD3 clustering on the cell surface and intracellular activation of LCK that phosphorylates the ITAM motifs of CD3G, CD3D, CD3E and CD247 enabling the recruitment of ZAP70. In turn, ZAP70 phosphorylates LAT, which recruits numerous signaling molecules to form the LAT signalosome. The LAT signalosome propagates signal branching to three major signaling pathways, the calcium, the mitogen-activated protein kinase (MAPK) kinase and the nuclear factor NF-kappa-B (NF-kB) pathways, leading to the mobilization of transcription factors that are critical for gene expression and essential for T cell differentiation into effector/memory T cells. The chain is T cell receptor alpha chain MC.7.G5 from Homo sapiens (Human).